Consider the following 468-residue polypeptide: ATP synthase subunit beta (468 aa).

155–162 (GGAGVGKT) is an ATP binding site.

It belongs to the ATPase alpha/beta chains family. In terms of assembly, F-type ATPases have 2 components, CF(1) - the catalytic core - and CF(0) - the membrane proton channel. CF(1) has five subunits: alpha(3), beta(3), gamma(1), delta(1), epsilon(1). CF(0) has three main subunits: a(1), b(2) and c(9-12). The alpha and beta chains form an alternating ring which encloses part of the gamma chain. CF(1) is attached to CF(0) by a central stalk formed by the gamma and epsilon chains, while a peripheral stalk is formed by the delta and b chains.

The protein localises to the cell membrane. The enzyme catalyses ATP + H2O + 4 H(+)(in) = ADP + phosphate + 5 H(+)(out). Its function is as follows. Produces ATP from ADP in the presence of a proton gradient across the membrane. The catalytic sites are hosted primarily by the beta subunits. The protein is ATP synthase subunit beta of Streptococcus pyogenes serotype M1.